The primary structure comprises 831 residues: Periplasmic nitrate reductase (831 aa).

A signal peptide (tat-type signal) is located at residues 1–29 (MKVSRRDFIKQTAIAATASVAGIPLGTEA). Positions 41 to 97 (LKWSKAPCRFCGTGCGVTVAVRDNKVVATQGDPQCEVNKGLNCVKGYFLSKIMYGQD) constitute a 4Fe-4S Mo/W bis-MGD-type domain. Positions 48, 51, 55, and 83 each coordinate [4Fe-4S] cluster. Mo-bis(molybdopterin guanine dinucleotide) contacts are provided by residues K85, Q152, N177, C181, 214–221 (WGSNMAEM), 245–249 (STFTH), 264–266 (QTD), M375, Q379, N485, 511–512 (SD), K534, D561, and 721–730 (TGRVLEHWHS). Position 797 (W797) interacts with substrate. N805 and K822 together coordinate Mo-bis(molybdopterin guanine dinucleotide).

The protein belongs to the prokaryotic molybdopterin-containing oxidoreductase family. NasA/NapA/NarB subfamily. In terms of assembly, component of the periplasmic nitrate reductase NapAB complex composed of NapA and NapB. The cofactor is [4Fe-4S] cluster. It depends on Mo-bis(molybdopterin guanine dinucleotide) as a cofactor. Predicted to be exported by the Tat system. The position of the signal peptide cleavage has not been experimentally proven.

The protein resides in the periplasm. It catalyses the reaction 2 Fe(II)-[cytochrome] + nitrate + 2 H(+) = 2 Fe(III)-[cytochrome] + nitrite + H2O. Its function is as follows. Catalytic subunit of the periplasmic nitrate reductase complex NapAB. Receives electrons from NapB and catalyzes the reduction of nitrate to nitrite. This Cupriavidus pinatubonensis (strain JMP 134 / LMG 1197) (Cupriavidus necator (strain JMP 134)) protein is Periplasmic nitrate reductase.